The primary structure comprises 519 residues: Glucose-1-phosphate adenylyltransferase large subunit 2, chloroplastic/amyloplastic (519 aa).

The protein belongs to the bacterial/plant glucose-1-phosphate adenylyltransferase family. In terms of assembly, heterotetramer. In terms of tissue distribution, leaves and tubers.

The protein resides in the plastid. It localises to the chloroplast. The protein localises to the amyloplast. The catalysed reaction is alpha-D-glucose 1-phosphate + ATP + H(+) = ADP-alpha-D-glucose + diphosphate. Its pathway is glycan biosynthesis; starch biosynthesis. Its activity is regulated as follows. Activated by 3'phosphoglycerate, inhibited by orthophosphate. Allosteric regulation. This protein plays a role in synthesis of starch. It catalyzes the synthesis of the activated glycosyl donor, ADP-glucose from Glc-1-P and ATP. This chain is Glucose-1-phosphate adenylyltransferase large subunit 2, chloroplastic/amyloplastic (AGPS2), found in Solanum tuberosum (Potato).